We begin with the raw amino-acid sequence, 154 residues long: Proteinase inhibitor type-2 P303.51 (154 aa).

An N-terminal signal peptide occupies residues 1-25 (MAVHKEVNFVAYLLIVLGLLVLVSA). A run of 2 repeats spans residues 31-87 (AKAC…DPKK) and 88-147 (PKAC…DEPK). Disulfide bonds link cysteine 34–cysteine 122, cysteine 38–cysteine 118, cysteine 46–cysteine 128, cysteine 58–cysteine 95, cysteine 61–cysteine 79, cysteine 62–cysteine 91, cysteine 68–cysteine 104, and cysteine 121–cysteine 139.

Belongs to the protease inhibitor I20 (potato type II proteinase inhibitor) family.

This is Proteinase inhibitor type-2 P303.51 from Solanum tuberosum (Potato).